The following is a 1013-amino-acid chain: Probable beta-galactosidase B (1013 aa).

An N-terminal signal peptide occupies residues 1–21 (MTRILNCLLVLLACLGVSSKA). Residue tyrosine 90 coordinates substrate. N-linked (GlcNAc...) asparagine glycosylation is present at asparagine 100. Substrate-binding residues include asparagine 135, alanine 136, glutamate 137, and asparagine 195. Residue glutamate 196 is the Proton donor of the active site. N-linked (GlcNAc...) asparagine glycosylation occurs at asparagine 211. Tyrosine 265 lines the substrate pocket. The cysteines at positions 271 and 324 are disulfide-linked. The active-site Nucleophile is glutamate 308. Tyrosine 373 contributes to the substrate binding site. N-linked (GlcNAc...) asparagine glycans are attached at residues asparagine 411, asparagine 442, asparagine 456, asparagine 626, asparagine 735, asparagine 768, and asparagine 775.

It belongs to the glycosyl hydrolase 35 family.

Its subcellular location is the secreted. It carries out the reaction Hydrolysis of terminal non-reducing beta-D-galactose residues in beta-D-galactosides.. Functionally, cleaves beta-linked terminal galactosyl residues from gangliosides, glycoproteins, and glycosaminoglycans. The chain is Probable beta-galactosidase B (lacB) from Penicillium rubens (strain ATCC 28089 / DSM 1075 / NRRL 1951 / Wisconsin 54-1255) (Penicillium chrysogenum).